Consider the following 633-residue polypeptide: Chaperone protein HtpG (633 aa).

Positions 1–345 are a; substrate-binding; the sequence is MSADTQSETL…SDDLPLNISR (345 aa). Residues 346–562 are b; the sequence is EMLQHNPMIS…EYDFGMGMQR (217 aa). A c region spans residues 563-633; that stretch reads LLQAAGHQLP…VRRVNNLLAG (71 aa).

Belongs to the heat shock protein 90 family. As to quaternary structure, homodimer.

The protein resides in the cytoplasm. Molecular chaperone. Has ATPase activity. The chain is Chaperone protein HtpG from Halorhodospira halophila (strain DSM 244 / SL1) (Ectothiorhodospira halophila (strain DSM 244 / SL1)).